A 134-amino-acid chain; its full sequence is Small ribosomal subunit protein bS16 (134 aa).

The interval 105–134 is disordered; it reads QNERREKRLAIKTRRRQAKKAAEAEGQESA. A compositionally biased stretch (basic residues) spans 114–123; it reads AIKTRRRQAK.

The protein belongs to the bacterial ribosomal protein bS16 family.

The protein is Small ribosomal subunit protein bS16 of Chlorobium phaeobacteroides (strain BS1).